We begin with the raw amino-acid sequence, 357 residues long: UDP-N-acetylglucosamine--N-acetylmuramyl-(pentapeptide) pyrophosphoryl-undecaprenol N-acetylglucosamine transferase (357 aa).

UDP-N-acetyl-alpha-D-glucosamine contacts are provided by residues 15–17 (TGG), asparagine 124, arginine 165, serine 194, and glutamine 288.

The protein belongs to the glycosyltransferase 28 family. MurG subfamily.

It is found in the cell inner membrane. The enzyme catalyses di-trans,octa-cis-undecaprenyl diphospho-N-acetyl-alpha-D-muramoyl-L-alanyl-D-glutamyl-meso-2,6-diaminopimeloyl-D-alanyl-D-alanine + UDP-N-acetyl-alpha-D-glucosamine = di-trans,octa-cis-undecaprenyl diphospho-[N-acetyl-alpha-D-glucosaminyl-(1-&gt;4)]-N-acetyl-alpha-D-muramoyl-L-alanyl-D-glutamyl-meso-2,6-diaminopimeloyl-D-alanyl-D-alanine + UDP + H(+). The protein operates within cell wall biogenesis; peptidoglycan biosynthesis. Cell wall formation. Catalyzes the transfer of a GlcNAc subunit on undecaprenyl-pyrophosphoryl-MurNAc-pentapeptide (lipid intermediate I) to form undecaprenyl-pyrophosphoryl-MurNAc-(pentapeptide)GlcNAc (lipid intermediate II). This chain is UDP-N-acetylglucosamine--N-acetylmuramyl-(pentapeptide) pyrophosphoryl-undecaprenol N-acetylglucosamine transferase, found in Nostoc sp. (strain PCC 7120 / SAG 25.82 / UTEX 2576).